The following is an 814-amino-acid chain: Probable G-protein coupled receptor 156 (814 aa).

The Extracellular portion of the chain corresponds to 1-47; that stretch reads MEPEINCSELCDSFPGQELDRRPLHDLCKTTITSSHHSSKTISSLSP. A glycan (N-linked (GlcNAc...) asparagine) is linked at N6. The helical transmembrane segment at 48-68 threads the bilayer; that stretch reads VLLGIVWTFLSCGLLLILFFL. Residues 69–86 are Cytoplasmic-facing; that stretch reads AFTIHCRKNRIVKMSSPN. A helical membrane pass occupies residues 87–107; it reads LNIVTLLGSCLTYSSAYLFGI. Over 108 to 118 the chain is Extracellular; the sequence is QDVLVGSSMET. The helical transmembrane segment at 119 to 139 threads the bilayer; the sequence is LIQTRLSMLCIGTSLVFGPIL. The Cytoplasmic portion of the chain corresponds to 140–164; the sequence is GKSWRLYKVFTQRVPDKRVIIKDLQ. The helical transmembrane segment at 165-185 threads the bilayer; the sequence is LLGLVAALLMADVILLMTWVL. Residues 186–222 are Extracellular-facing; sequence TDPIQCLQILSVSMTVTGKDVSCTSTSTHFCASRYSD. The helical transmembrane segment at 223–243 threads the bilayer; sequence VWIALIWGCKGLLLLYGAYLA. At 244 to 257 the chain is on the cytoplasmic side; sequence GLTGHVSSPPVNQS. The helical transmembrane segment at 258–278 threads the bilayer; it reads LTIMVGVNLLVLAAGLLFVVT. Residues 279-288 lie on the Extracellular side of the membrane; sequence RYLHSWPNLV. The chain crosses the membrane as a helical span at residues 289-309; that stretch reads FGLTSGGIFVCTTTINCFIFI. Topologically, residues 310–814 are cytoplasmic; the sequence is PQLKQWKAFE…FKDDLKPTLV (505 aa). The stretch at 354–390 forms a coiled coil; that stretch reads EKSSMERLLTEKNAVIESLQEQVNNAKEKIVRLMSAE. Disordered stretches follow at residues 422–545, 557–724, and 769–792; these read AQGP…SSVI, GLGP…PEQW, and SSSD…LASW. The span at 443–454 shows a compositional bias: polar residues; it reads SQCTSGPSSYAQ. Residues 468-484 are compositionally biased toward basic and acidic residues; sequence GKEEKISDSKDFSDHLD. Polar residues predominate over residues 486–496; sequence GCSQKPWTEQS. The span at 523–545 shows a compositional bias: basic and acidic residues; it reads QRQRHLENSEEPPERRSRVSSVI. Residues 563–581 are compositionally biased toward polar residues; the sequence is SLSTAPSCHQQTWKNSAAF. Residues 599 to 610 show a composition bias toward basic residues; the sequence is VRRRRAAQRARS. Residues 639–651 show a composition bias toward polar residues; that stretch reads NGDSPSLAPQTTD. Positions 769 to 780 are enriched in low complexity; it reads SSSDSSDSGTSD.

Belongs to the G-protein coupled receptor 3 family. GABA-B receptor subfamily. As to expression, ubiquitous expression both in the CNS and in peripheral tissues. Very high expression in fetal brain and testis relative to expression in other tissues.

Its subcellular location is the cell membrane. Its function is as follows. Orphan G-protein coupled receptor involved in the regulation of hair cell orientation in mechanosensory organs of the inner ear. It is required to trigger a 180 degree reversal in hair cell orientation, creating a virtual line of polarity reversal (LPR) across which stereociliary bundles are arranged in opposite orientations. The sequence is that of Probable G-protein coupled receptor 156 (GPR156) from Homo sapiens (Human).